Here is a 197-residue protein sequence, read N- to C-terminus: Probable GTP-binding protein EngB (197 aa).

Residues 25–197 form the EngB-type G domain; the sequence is SAPEIAFAGR…VRDEFFKFTR (173 aa). Residues 33–40, 60–64, 79–82, 146–149, and 177–179 contribute to the GTP site; these read GRSNVGKS, GCTRQ, DLPG, TKID, and ISV. Ser-40 and Thr-62 together coordinate Mg(2+).

This sequence belongs to the TRAFAC class TrmE-Era-EngA-EngB-Septin-like GTPase superfamily. EngB GTPase family. It depends on Mg(2+) as a cofactor.

Necessary for normal cell division and for the maintenance of normal septation. The sequence is that of Probable GTP-binding protein EngB from Wolbachia sp. subsp. Brugia malayi (strain TRS).